The chain runs to 796 residues: AUGMIN subunit 5 (796 aa).

The disordered stretch occupies residues 79 to 120; that stretch reads HGGSSNASIGSSVNPGKEESKSKGRRKDKTVTGESSSYAEDR. The span at 80–92 shows a compositional bias: polar residues; sequence GGSSNASIGSSVN. 2 coiled-coil regions span residues 115-191 and 462-501; these read SYAE…EATR and GKER…LKKK.

It belongs to the HAUS5 family. As to quaternary structure, part of the augmin complex composed of 8 subunits. The complex acts on microtubules and interacts with gamma-tubulin in spindles and the phragmoplast.

Its subcellular location is the cytoplasm. It is found in the cytoskeleton. The protein resides in the spindle. It localises to the phragmoplast. Its function is as follows. Involved in microtubules reorganization during spindle and phragmoplast development. In Arabidopsis thaliana (Mouse-ear cress), this protein is AUGMIN subunit 5.